Here is a 339-residue protein sequence, read N- to C-terminus: Protein-arginine kinase (339 aa).

The Phosphagen kinase C-terminal domain maps to 14–242 (IVINSNISLS…LNVISEEKKF (229 aa)). ATP is bound by residues 17 to 21 (NSNIS), 164 to 168 (RASVN), and 195 to 200 (KGLYEE).

Belongs to the ATP:guanido phosphotransferase family.

The enzyme catalyses L-arginyl-[protein] + ATP = N(omega)-phospho-L-arginyl-[protein] + ADP + H(+). In terms of biological role, catalyzes the specific phosphorylation of arginine residues in proteins. The sequence is that of Protein-arginine kinase from Clostridium botulinum (strain Eklund 17B / Type B).